The chain runs to 524 residues: Glutamyl-tRNA(Gln) amidotransferase subunit A (524 aa).

Residues Lys-109 and Ser-184 each act as charge relay system in the active site. The Acyl-ester intermediate role is filled by Ser-208.

Belongs to the amidase family. GatA subfamily. In terms of assembly, heterotrimer of A, B and C subunits.

The enzyme catalyses L-glutamyl-tRNA(Gln) + L-glutamine + ATP + H2O = L-glutaminyl-tRNA(Gln) + L-glutamate + ADP + phosphate + H(+). Its function is as follows. Allows the formation of correctly charged Gln-tRNA(Gln) through the transamidation of misacylated Glu-tRNA(Gln) in organisms which lack glutaminyl-tRNA synthetase. The reaction takes place in the presence of glutamine and ATP through an activated gamma-phospho-Glu-tRNA(Gln). The protein is Glutamyl-tRNA(Gln) amidotransferase subunit A of Tropheryma whipplei (strain Twist) (Whipple's bacillus).